Here is an 82-residue protein sequence, read N- to C-terminus: MSSINYPFVTEKAMMLLDENKLQFIVDTRSNKKQIVEDVEKLYGFKVKSVRTMTTMKGTKKAILTFEDPESAHEIATRIGLM.

It belongs to the universal ribosomal protein uL23 family. In terms of assembly, part of the 50S ribosomal subunit. Contacts protein L29.

Its function is as follows. Binds to 23S rRNA. One of the proteins that surrounds the polypeptide exit tunnel on the outside of the ribosome. This chain is Large ribosomal subunit protein uL23, found in Methanosarcina barkeri (strain Fusaro / DSM 804).